Consider the following 51-residue polypeptide: Ovomucoid (51 aa).

In terms of domain architecture, Kazal-like spans 3–51; sequence IDCSGYPKPACTLEFFPLCGSDNQTYSNKCAFCNAAVEKNVTLNHIGEC. Intrachain disulfides connect cysteine 5/cysteine 35, cysteine 13/cysteine 32, and cysteine 21/cysteine 51. Asparagine 42 carries N-linked (GlcNAc...) asparagine glycosylation.

The protein resides in the secreted. This chain is Ovomucoid, found in Eudromia elegans (Elegant crested-tinamou).